Reading from the N-terminus, the 376-residue chain is Queuine tRNA-ribosyltransferase (376 aa).

The active-site Proton acceptor is Asp-89. Substrate contacts are provided by residues 89–93 (DSGGF), Asp-143, Gln-194, and Gly-221. An RNA binding region spans residues 252 to 258 (GVGTPAN). The active-site Nucleophile is Asp-271. Residues Cys-309, Cys-311, Cys-314, and His-340 each contribute to the Zn(2+) site.

This sequence belongs to the queuine tRNA-ribosyltransferase family. In terms of assembly, homodimer. Within each dimer, one monomer is responsible for RNA recognition and catalysis, while the other monomer binds to the replacement base PreQ1. Zn(2+) is required as a cofactor.

The catalysed reaction is 7-aminomethyl-7-carbaguanine + guanosine(34) in tRNA = 7-aminomethyl-7-carbaguanosine(34) in tRNA + guanine. The protein operates within tRNA modification; tRNA-queuosine biosynthesis. Its function is as follows. Catalyzes the base-exchange of a guanine (G) residue with the queuine precursor 7-aminomethyl-7-deazaguanine (PreQ1) at position 34 (anticodon wobble position) in tRNAs with GU(N) anticodons (tRNA-Asp, -Asn, -His and -Tyr). Catalysis occurs through a double-displacement mechanism. The nucleophile active site attacks the C1' of nucleotide 34 to detach the guanine base from the RNA, forming a covalent enzyme-RNA intermediate. The proton acceptor active site deprotonates the incoming PreQ1, allowing a nucleophilic attack on the C1' of the ribose to form the product. After dissociation, two additional enzymatic reactions on the tRNA convert PreQ1 to queuine (Q), resulting in the hypermodified nucleoside queuosine (7-(((4,5-cis-dihydroxy-2-cyclopenten-1-yl)amino)methyl)-7-deazaguanosine). The polypeptide is Queuine tRNA-ribosyltransferase (Clostridium kluyveri (strain NBRC 12016)).